Reading from the N-terminus, the 218-residue chain is Probable nicotinate-nucleotide adenylyltransferase (218 aa).

Belongs to the NadD family.

The enzyme catalyses nicotinate beta-D-ribonucleotide + ATP + H(+) = deamido-NAD(+) + diphosphate. It participates in cofactor biosynthesis; NAD(+) biosynthesis; deamido-NAD(+) from nicotinate D-ribonucleotide: step 1/1. In terms of biological role, catalyzes the reversible adenylation of nicotinate mononucleotide (NaMN) to nicotinic acid adenine dinucleotide (NaAD). The polypeptide is Probable nicotinate-nucleotide adenylyltransferase (Halorhodospira halophila (strain DSM 244 / SL1) (Ectothiorhodospira halophila (strain DSM 244 / SL1))).